The primary structure comprises 463 residues: MSLIVTRFAPSPTGYLHIGGLRTAIFNYLFARANQGKFFLRIEDTDLSRNSIEAANAIIEAFKWVGLEYDGEILYQSKRFEIYKEYIQKLLDEDKAYYCYMSKDELDALREEQKARKETPRYDNRYRDFKGTPPKGIEPVVRIKVPQNEVIVFNDGVKGEVKVNTNELDDFIIARSDGTPTYNFVVIVDDALMGITDVIRGDDHLSNTPKQIVLYKALNFKIPNFFHVPMILNEEGQKLSKRHGATNVMDYQERGYLKEALVNFLARLGWSYQDKEIFSMQELLECFDPKDLNSSPSCFSWHKLNWLNAHYLKNQSAQELLELLKPFSFSDLSHLNPAQLDRLLDALKERSQTLKELALKIDEVLTAPIEYEKKVFKKLNQALVMPLLEKFKLELNKVNFNDENALENAMHKIIEEEKIKAGSFMQPLRLALLGKGGGIGLKEALFILGKTESLKRIEKFLKN.

The 'HIGH' region signature appears at 10 to 20 (PSPTGYLHIGG). The short motif at 238–242 (KLSKR) is the 'KMSKS' region element. Lys241 contributes to the ATP binding site.

Belongs to the class-I aminoacyl-tRNA synthetase family. Glutamate--tRNA ligase type 1 subfamily. Monomer.

It localises to the cytoplasm. It carries out the reaction tRNA(Glu) + L-glutamate + ATP = L-glutamyl-tRNA(Glu) + AMP + diphosphate. Functionally, catalyzes the attachment of glutamate to tRNA(Glu) in a two-step reaction: glutamate is first activated by ATP to form Glu-AMP and then transferred to the acceptor end of tRNA(Glu). The sequence is that of Glutamate--tRNA ligase 1 from Helicobacter pylori (strain HPAG1).